Here is a 187-residue protein sequence, read N- to C-terminus: MVKTVYVTGYKSFELNIFKDDAPEIHYLKQFIKHKIEQLLDEGLEWVLIQGQMGIELWTTEVVIELQRTYDSLKFAVITPFQGHTEKWNEHNQSKYANIIKHADYVDSIFHTSYQGPFQFKQADQFMLEHSDQTLLIYDEEQEASPKFFKQMLVDFMDKTNYTCDIVTFDELTAFINDLQWSEDQSF.

Belongs to the UPF0398 family.

This Staphylococcus aureus (strain bovine RF122 / ET3-1) protein is UPF0398 protein SAB1311c.